A 591-amino-acid polypeptide reads, in one-letter code: L-fucose isomerase (591 aa).

Residues Glu338 and Asp362 each act as proton acceptor in the active site. Mn(2+) contacts are provided by Glu338, Asp362, and His529.

This sequence belongs to the L-fucose isomerase family. Requires Mn(2+) as cofactor.

It is found in the cytoplasm. It catalyses the reaction L-fucose = L-fuculose. It functions in the pathway carbohydrate degradation; L-fucose degradation; L-lactaldehyde and glycerone phosphate from L-fucose: step 1/3. Its function is as follows. Converts the aldose L-fucose into the corresponding ketose L-fuculose. The chain is L-fucose isomerase from Bacteroides thetaiotaomicron (strain ATCC 29148 / DSM 2079 / JCM 5827 / CCUG 10774 / NCTC 10582 / VPI-5482 / E50).